A 124-amino-acid chain; its full sequence is Small ribosomal subunit protein uS13 (124 aa).

The tract at residues glycine 95–arginine 124 is disordered. Residues glutamine 101–arginine 124 show a composition bias toward basic residues.

This sequence belongs to the universal ribosomal protein uS13 family. As to quaternary structure, part of the 30S ribosomal subunit. Forms a loose heterodimer with protein S19. Forms two bridges to the 50S subunit in the 70S ribosome.

Functionally, located at the top of the head of the 30S subunit, it contacts several helices of the 16S rRNA. In the 70S ribosome it contacts the 23S rRNA (bridge B1a) and protein L5 of the 50S subunit (bridge B1b), connecting the 2 subunits; these bridges are implicated in subunit movement. Contacts the tRNAs in the A and P-sites. This Coprothermobacter proteolyticus (strain ATCC 35245 / DSM 5265 / OCM 4 / BT) protein is Small ribosomal subunit protein uS13.